The primary structure comprises 1378 residues: MADDHKLCGFLCTVLSVDSPDLLQSGSSCFIFNDGSVTGFKSENGLILSLTNPISNLQSLISSKGDHDVENSGTIEDGRLETPQKRRKCVEGESSGKRKTPKSKRRVLSGSKEKTVQGRKRVKSIGMVNGSISVVQQLHALVANKCLKIICRVVKVDKGENGEERAVVLVDVYLPIELWSGWQFPKSQATAAALFKHLSCDWGLRVSILDGKSIWEEANGRIKAIWDLSDCHVFDCKLLCNAPNSPKRRLFKLHEIFKSLPSPGNHDVSYSSRVLPSTDSCVSGVWDLSDDVLISILMKLDTKDLFSIAAVCRLFRSLTSLIVPCMNLKLFPHQQAAVGWMLERERKAEVSSHPLYLSFDTEDGFSFYVNAVTGDIITEAAPMVKDFRGGMFCDEPGLGKTITALSLILKTQGTMADPPEGLPIVWCTHKSDKKCAYYEYTSDQFTSNSMSAVKRFQSPSSCRNQVSFEAFRPLLESKSLPFKQARLMDPDDQTLESKNSNFENEFETHIPASLDLKAQCRKSLGNVRKNLLPAYNGASELSEVMEAKRISNWKKCGMITGCKRKGLTDSDVESDIWMQCDSCSKWRRIIDEGVSVTGSAWFCSNNNDPAYQSCNDPEELWDKSQPIKYLQGFYTKGASGEESDNISFFTSVLREHKSSVSSTVKKALIWLAKLPLEKLSQMETVGLPGPVLGLKLDALGFQRIFRAFGLKSRVEKGVTKWFYPKFLENLVFDVPALKVALCQPLDTFRLYLSKATLIVVPTNLVNHWLTQIQKHVCSDQLRILVWADHIELSPHSLAWDYDVVITTFSRLSAEWNPRKKSPLIQVHWLRVMLDEGHTLGSSVSLTNKFQMAVSLTACNRWLLTGTPTPNTPNSQLSHIQPLLKFLHEEVYGENPKFWEAGILRPFEAEMEEGRLRLLQLLQRCMISSRKKDLQMIPPCIKKVTYLNFLPGHARSYNELVETVRRNILLADWNDPSHVESLLNSKQWKFRSITISNVRLSCCVAGHIKMTDAGHDIKETMDALLENDLDLWTEEYSFIQDSLIGGCNCKRCGEWCRLPVITPCRHLLCLDCVALDSERCTISGCGYLYEMQTPETLARPENPNPKWPVPKDLIELQPSYKQDDWNPDWQSTSSSKVSYLVDRLRKLHEGNKKSILSFNKTDNDNLEDNPPGTSEAFLGKELHGQDCGSQMVFVDKVLIFSQFLEHIHVIEQQLTTAGIKFGKMYSPMQSYNKMKALAMFQNDADCMALLMDGSGALGLDLSFVTHVFLMEPIWDKSLEEQVISRAHRMGAKRPIFVETLTMRGTIEEQMMRFLEDAEKSDRLLSGDYIEAKQETTRSRRTLHDLVESNYLSHLSFVRSDGKMEFAASQLAGLKDHQLA.

Residues glycine 65 to glycine 96 are compositionally biased toward basic and acidic residues. The interval glycine 65–glutamate 113 is disordered. The span at lysine 97–valine 107 shows a compositional bias: basic residues. The F-box domain maps to valine 282–leucine 328. The segment at aspartate 571–aspartate 622 adopts a CW-type zinc-finger fold. Zn(2+)-binding residues include cysteine 580, cysteine 583, cysteine 603, and cysteine 614. Positions lysine 720–phenylalanine 885 constitute a Helicase ATP-binding domain. ATP is bound at residue aspartate 733–alanine 740. The DEAH box signature appears at aspartate 834 to histidine 837. Residues aspartate 1185–serine 1324 form the Helicase C-terminal domain.

This sequence belongs to the helicase family.

The protein is F-box protein At3g54460 of Arabidopsis thaliana (Mouse-ear cress).